A 428-amino-acid chain; its full sequence is Tyrosine--tRNA ligase (428 aa).

Tyr36 serves as a coordination point for L-tyrosine. The short motif at 41–50 (PTAPSLHAGH) is the 'HIGH' region element. L-tyrosine contacts are provided by Tyr171 and Gln175. Positions 231 to 235 (KFGKS) match the 'KMSKS' region motif. Position 234 (Lys234) interacts with ATP. In terms of domain architecture, S4 RNA-binding spans 359–416 (DSIVDLLVETGLAASKGAARRNVAEGGVYVNNIRIESDEWIPQHSDFLHERWLVLRRG).

It belongs to the class-I aminoacyl-tRNA synthetase family. TyrS type 1 subfamily. As to quaternary structure, homodimer.

Its subcellular location is the cytoplasm. The enzyme catalyses tRNA(Tyr) + L-tyrosine + ATP = L-tyrosyl-tRNA(Tyr) + AMP + diphosphate + H(+). Functionally, catalyzes the attachment of tyrosine to tRNA(Tyr) in a two-step reaction: tyrosine is first activated by ATP to form Tyr-AMP and then transferred to the acceptor end of tRNA(Tyr). This chain is Tyrosine--tRNA ligase, found in Mycolicibacterium fortuitum (Mycobacterium fortuitum).